Here is a 392-residue protein sequence, read N- to C-terminus: Anhydro-N-acetylmuramic acid kinase (392 aa).

Position 22-29 (22-29 (GTSMDGVD)) interacts with ATP.

The protein belongs to the anhydro-N-acetylmuramic acid kinase family.

It catalyses the reaction 1,6-anhydro-N-acetyl-beta-muramate + ATP + H2O = N-acetyl-D-muramate 6-phosphate + ADP + H(+). The protein operates within amino-sugar metabolism; 1,6-anhydro-N-acetylmuramate degradation. It participates in cell wall biogenesis; peptidoglycan recycling. In terms of biological role, catalyzes the specific phosphorylation of 1,6-anhydro-N-acetylmuramic acid (anhMurNAc) with the simultaneous cleavage of the 1,6-anhydro ring, generating MurNAc-6-P. Is required for the utilization of anhMurNAc either imported from the medium or derived from its own cell wall murein, and thus plays a role in cell wall recycling. This Burkholderia mallei (strain NCTC 10229) protein is Anhydro-N-acetylmuramic acid kinase.